A 206-amino-acid chain; its full sequence is MAEYIEVRVENLHKWGLEINMERIEKLSKRLKSIVDEDCIMKTSRIIGIWMFMPEIVQESLKDSPLMTQKAWIIPHEKTYKTIYGKDGIQMAVTQNEEDLFKDSEFFMISRCDSVMLTKNNKTIILNKELLNCNMSEDMLFNMLSCQEQDITEELMKKMKTIISSNPKERLEDKTEEVFWNSTRILNWIQHNDNSRSNSSDNSFRE.

This is an uncharacterized protein from Citrus psorosis virus (isolate Spain/P-121) (CPsV).